Here is a 347-residue protein sequence, read N- to C-terminus: DNA damage tolerance protein RHC31 (347 aa).

At Ser9 the chain carries Phosphoserine. A Glycyl lysine isopeptide (Lys-Gly) (interchain with G-Cter in SUMO) cross-link involves residue Lys35.

In terms of biological role, could be involved in a ubiquitin-related process important for DNA damage tolerance. The chain is DNA damage tolerance protein RHC31 (AOS1) from Saccharomyces cerevisiae (strain ATCC 204508 / S288c) (Baker's yeast).